The sequence spans 109 residues: DNA-binding protein Mpal_0536 (109 aa).

The interval Met-14 to Lys-35 is disordered. Low complexity predominate over residues Gln-16–Gln-25.

Belongs to the PDCD5 family.

The polypeptide is DNA-binding protein Mpal_0536 (Methanosphaerula palustris (strain ATCC BAA-1556 / DSM 19958 / E1-9c)).